The chain runs to 1008 residues: Collagen, type I, alpha 1a (1008 aa).

Residues 1–21 show a composition bias toward pro residues; the sequence is SPAMPVPGPMGPMGPRGPPGS. The tract at residues 1 to 920 is disordered; it reads SPAMPVPGPM…PQEKAPDPFR (920 aa). Basic and acidic residues predominate over residues 39–53; that stretch reads NGEDGESGKPGRGGE. A compositionally biased stretch (low complexity) spans 92-117; sequence TPGAMGPRGAAGAAGARGNDGAAGAA. Residues 119–132 show a composition bias toward pro residues; it reads PPGPTGPAGPPGFP. The segment covering 133 to 151 has biased composition (gly residues); it reads GGPGAKGDAGAQGGRGPEG. Composition is skewed to low complexity over residues 152 to 195 and 204 to 230; these read PAGA…AGAP and SGPQ…APGV. Positions 253-265 are enriched in gly residues; it reads GARGGPGGRGFPG. 2 stretches are compositionally biased toward low complexity: residues 339-354 and 410-422; these read VGAR…PGPK and LPGE…PAGA. The span at 423-435 shows a compositional bias: basic and acidic residues; the sequence is RGDRGFPGERGAK. Composition is skewed to low complexity over residues 437 to 456, 489 to 524, and 537 to 573; these read DAGA…QGMP, RGLT…ARGA, and AGFA…AGPT. Residues 604 to 617 are compositionally biased toward pro residues; sequence PPGPSGNPGPPGPA. Over residues 634–661 the composition is skewed to low complexity; it reads PAGRPGELGAAGPPGPAGEKGSPGSEGA. The span at 696–709 shows a compositional bias: gly residues; it reads GEAGGPSGPGGERG. The segment covering 717 to 735 has biased composition (low complexity); the sequence is PGLAGAPGEPGREGSPGNE. Pro residues predominate over residues 761–771; it reads APGPPGAPGPV. The segment covering 785–806 has biased composition (low complexity); the sequence is PAGPAGSAGPSGPRGPAGAPGL. Basic and acidic residues predominate over residues 807 to 821; sequence RGDKGESGEAGERRG. Residues 832–868 are compositionally biased toward low complexity; it reads SGSSGEQGPAGAAGPAGPRGPAGSAGSPGKDGMSGLP. The span at 884 to 896 shows a compositional bias: pro residues; sequence AGPPGPPGPPGAP. Residues 978-1008 enclose the Fibrillar collagen NC1 domain; that stretch reads TSRLPLLDLAPMDVGAPDQEFGLEVGPVCFL.

It belongs to the fibrillar collagen family.

It localises to the secreted. Its subcellular location is the extracellular space. It is found in the extracellular matrix. This is Collagen, type I, alpha 1a from Epinephelus aeneus (White grouper).